We begin with the raw amino-acid sequence, 174 residues long: Co-chaperone protein HscB homolog (174 aa).

The region spanning 2–74 (NYFELFKFSP…IRRAEHMLSL (73 aa)) is the J domain.

It belongs to the HscB family. In terms of assembly, interacts with HscA and stimulates its ATPase activity.

Co-chaperone involved in the maturation of iron-sulfur cluster-containing proteins. Seems to help targeting proteins to be folded toward HscA. This is Co-chaperone protein HscB homolog from Shewanella baltica (strain OS185).